The sequence spans 495 residues: ATP synthase subunit beta (495 aa).

Residue 178 to 185 participates in ATP binding; the sequence is GGAGVGKT.

Belongs to the ATPase alpha/beta chains family. As to quaternary structure, F-type ATPases have 2 components, CF(1) - the catalytic core - and CF(0) - the membrane proton channel. CF(1) has five subunits: alpha(3), beta(3), gamma(1), delta(1), epsilon(1). CF(0) has three main subunits: a(1), b(2) and c(9-12). The alpha and beta chains form an alternating ring which encloses part of the gamma chain. CF(1) is attached to CF(0) by a central stalk formed by the gamma and epsilon chains, while a peripheral stalk is formed by the delta and b chains.

The protein localises to the cell membrane. The catalysed reaction is ATP + H2O + 4 H(+)(in) = ADP + phosphate + 5 H(+)(out). Its function is as follows. Produces ATP from ADP in the presence of a proton gradient across the membrane. The catalytic sites are hosted primarily by the beta subunits. The sequence is that of ATP synthase subunit beta from Bifidobacterium animalis subsp. lactis (strain AD011).